We begin with the raw amino-acid sequence, 254 residues long: UPF0246 protein Fphi_1075 (254 aa).

Belongs to the UPF0246 family.

This chain is UPF0246 protein Fphi_1075, found in Francisella philomiragia subsp. philomiragia (strain ATCC 25017 / CCUG 19701 / FSC 153 / O#319-036).